Consider the following 231-residue polypeptide: uncharacterized protein (231 aa).

Residue 10–34 coordinates NADP(+); it reads VVTGAGSGIGEAIATLLHEEGAKVV. Serine 140 is a substrate binding site. The active-site Proton acceptor is the tyrosine 153.

It belongs to the short-chain dehydrogenases/reductases (SDR) family.

This is an uncharacterized protein from Staphylococcus aureus (strain MW2).